The following is a 305-amino-acid chain: MSPETARPFIDIHAPVAQALAAGRPVVALESTIITHGMPYPDNGAMAANVEKIISDGGAVPATIAVIGGRIKIGLSDGERESLAMTGDAMKLSRADLGFAVAQGRTGGTTVAATMIAAEMVGIKVFATGGIGGVHKGAEKSFDISADLDELARTPVIVVSAGAKAILDIEKTLEVLETRGVPVVGHGCETMPAFWSRQSPFRAPLTLYKPEEIAHFFRTRVALGLGGGVLVANPVPENHEIPAEEMAGYIEAAQKAAEALNVTGKAVTPFLLGKILELTGGRSLKTNIALVENNARLAAEIAKAL.

The active-site Proton donor is glutamate 30. Residues lysine 91 and valine 111 each contribute to the substrate site. Aspartate 143 contributes to the Mn(2+) binding site. A substrate-binding site is contributed by 145-147; the sequence is SAD. The active-site Nucleophile is lysine 164.

The protein belongs to the pseudouridine-5'-phosphate glycosidase family. As to quaternary structure, homotrimer. Mn(2+) serves as cofactor.

It catalyses the reaction D-ribose 5-phosphate + uracil = psi-UMP + H2O. Its function is as follows. Catalyzes the reversible cleavage of pseudouridine 5'-phosphate (PsiMP) to ribose 5-phosphate and uracil. Functions biologically in the cleavage direction, as part of a pseudouridine degradation pathway. This chain is Pseudouridine-5'-phosphate glycosidase, found in Mesorhizobium japonicum (strain LMG 29417 / CECT 9101 / MAFF 303099) (Mesorhizobium loti (strain MAFF 303099)).